A 1279-amino-acid chain; its full sequence is ATP-dependent helicase/nuclease subunit A (1279 aa).

The 496-residue stretch at 4–499 (TKWTDEQRQA…VKLFKNFRSR (496 aa)) folds into the UvrD-like helicase ATP-binding domain. 25-32 (AGAGAGKT) contributes to the ATP binding site. The UvrD-like helicase C-terminal domain occupies 526–853 (EEALKVGASY…RIMSIHKSKG (328 aa)).

Belongs to the helicase family. AddA subfamily. In terms of assembly, heterodimer of AddA and AddB/RexB. The cofactor is Mg(2+).

It catalyses the reaction Couples ATP hydrolysis with the unwinding of duplex DNA by translocating in the 3'-5' direction.. The enzyme catalyses ATP + H2O = ADP + phosphate + H(+). The heterodimer acts as both an ATP-dependent DNA helicase and an ATP-dependent, dual-direction single-stranded exonuclease. Recognizes the chi site generating a DNA molecule suitable for the initiation of homologous recombination. The AddA nuclease domain is required for chi fragment generation; this subunit has the helicase and 3' -&gt; 5' nuclease activities. This is ATP-dependent helicase/nuclease subunit A from Clostridium botulinum (strain Hall / ATCC 3502 / NCTC 13319 / Type A).